A 160-amino-acid chain; its full sequence is 2-C-methyl-D-erythritol 2,4-cyclodiphosphate synthase (160 aa).

Residues Asp11 and His13 each coordinate a divalent metal cation. Residues 11–13 (DIH) and 37–38 (HS) contribute to the 4-CDP-2-C-methyl-D-erythritol 2-phosphate site. His45 serves as a coordination point for a divalent metal cation. Residues 59-61 (DIG), 135-138 (TTNE), and Arg145 each bind 4-CDP-2-C-methyl-D-erythritol 2-phosphate.

The protein belongs to the IspF family. As to quaternary structure, homotrimer. A divalent metal cation is required as a cofactor.

The catalysed reaction is 4-CDP-2-C-methyl-D-erythritol 2-phosphate = 2-C-methyl-D-erythritol 2,4-cyclic diphosphate + CMP. It participates in isoprenoid biosynthesis; isopentenyl diphosphate biosynthesis via DXP pathway; isopentenyl diphosphate from 1-deoxy-D-xylulose 5-phosphate: step 4/6. Involved in the biosynthesis of isopentenyl diphosphate (IPP) and dimethylallyl diphosphate (DMAPP), two major building blocks of isoprenoid compounds. Catalyzes the conversion of 4-diphosphocytidyl-2-C-methyl-D-erythritol 2-phosphate (CDP-ME2P) to 2-C-methyl-D-erythritol 2,4-cyclodiphosphate (ME-CPP) with a corresponding release of cytidine 5-monophosphate (CMP). The chain is 2-C-methyl-D-erythritol 2,4-cyclodiphosphate synthase from Synechococcus elongatus (strain ATCC 33912 / PCC 7942 / FACHB-805) (Anacystis nidulans R2).